Reading from the N-terminus, the 161-residue chain is Regulator of ribonuclease activity A (161 aa).

This sequence belongs to the RraA family. In terms of assembly, homotrimer. Binds to both RNA-binding sites in the C-terminal region of Rne and to RhlB.

Its subcellular location is the cytoplasm. Functionally, globally modulates RNA abundance by binding to RNase E (Rne) and regulating its endonucleolytic activity. Can modulate Rne action in a substrate-dependent manner by altering the composition of the degradosome. Modulates RNA-binding and helicase activities of the degradosome. The chain is Regulator of ribonuclease activity A from Enterobacter sp. (strain 638).